The sequence spans 243 residues: Urease accessory protein UreF 2 (243 aa).

It belongs to the UreF family. As to quaternary structure, ureD, UreF and UreG form a complex that acts as a GTP-hydrolysis-dependent molecular chaperone, activating the urease apoprotein by helping to assemble the nickel containing metallocenter of UreC. The UreE protein probably delivers the nickel.

The protein resides in the cytoplasm. In terms of biological role, required for maturation of urease via the functional incorporation of the urease nickel metallocenter. Disrupting the ure2 operon has no effect on urease activity or pathogen survival in BALB/c mice when administered orally. In Brucella abortus (strain 2308), this protein is Urease accessory protein UreF 2.